We begin with the raw amino-acid sequence, 392 residues long: Phospho-N-acetylmuramoyl-pentapeptide-transferase (392 aa).

The next 10 helical transmembrane spans lie at 29 to 49 (AVMA…FVIR), 76 to 96 (TMGG…WFDL), 100 to 120 (FVWI…ADDW), 137 to 157 (YLWQ…SISE), 193 to 213 (ISYP…IVGS), 225 to 245 (GLAI…AYVT), 262 to 282 (SGEL…FLWF), 289 to 309 (VFMG…IAVI), 314 to 334 (IVLA…MMQV), and 369 to 389 (QVVV…LSTL).

Belongs to the glycosyltransferase 4 family. MraY subfamily. It depends on Mg(2+) as a cofactor.

The protein localises to the cell inner membrane. The catalysed reaction is UDP-N-acetyl-alpha-D-muramoyl-L-alanyl-gamma-D-glutamyl-meso-2,6-diaminopimeloyl-D-alanyl-D-alanine + di-trans,octa-cis-undecaprenyl phosphate = di-trans,octa-cis-undecaprenyl diphospho-N-acetyl-alpha-D-muramoyl-L-alanyl-D-glutamyl-meso-2,6-diaminopimeloyl-D-alanyl-D-alanine + UMP. It functions in the pathway cell wall biogenesis; peptidoglycan biosynthesis. Catalyzes the initial step of the lipid cycle reactions in the biosynthesis of the cell wall peptidoglycan: transfers peptidoglycan precursor phospho-MurNAc-pentapeptide from UDP-MurNAc-pentapeptide onto the lipid carrier undecaprenyl phosphate, yielding undecaprenyl-pyrophosphoryl-MurNAc-pentapeptide, known as lipid I. This Polaromonas sp. (strain JS666 / ATCC BAA-500) protein is Phospho-N-acetylmuramoyl-pentapeptide-transferase.